The primary structure comprises 71 residues: Exodeoxyribonuclease 7 small subunit (71 aa).

It belongs to the XseB family. In terms of assembly, heterooligomer composed of large and small subunits.

The protein resides in the cytoplasm. The enzyme catalyses Exonucleolytic cleavage in either 5'- to 3'- or 3'- to 5'-direction to yield nucleoside 5'-phosphates.. Its function is as follows. Bidirectionally degrades single-stranded DNA into large acid-insoluble oligonucleotides, which are then degraded further into small acid-soluble oligonucleotides. This is Exodeoxyribonuclease 7 small subunit from Clostridium botulinum (strain Loch Maree / Type A3).